Consider the following 392-residue polypeptide: 1-deoxy-D-xylulose 5-phosphate reductoisomerase (392 aa).

Residues T14, G15, S16, I17, G40, Q43, and N126 each coordinate NADPH. Residue K127 coordinates 1-deoxy-D-xylulose 5-phosphate. E128 serves as a coordination point for NADPH. D150 serves as a coordination point for Mn(2+). S151, E152, S176, and H199 together coordinate 1-deoxy-D-xylulose 5-phosphate. Position 152 (E152) interacts with Mn(2+). Residue G205 coordinates NADPH. 1-deoxy-D-xylulose 5-phosphate-binding residues include S212, N217, K218, and E221. A Mn(2+)-binding site is contributed by E221.

It belongs to the DXR family. Requires Mg(2+) as cofactor. It depends on Mn(2+) as a cofactor.

The catalysed reaction is 2-C-methyl-D-erythritol 4-phosphate + NADP(+) = 1-deoxy-D-xylulose 5-phosphate + NADPH + H(+). It functions in the pathway isoprenoid biosynthesis; isopentenyl diphosphate biosynthesis via DXP pathway; isopentenyl diphosphate from 1-deoxy-D-xylulose 5-phosphate: step 1/6. Its function is as follows. Catalyzes the NADPH-dependent rearrangement and reduction of 1-deoxy-D-xylulose-5-phosphate (DXP) to 2-C-methyl-D-erythritol 4-phosphate (MEP). The polypeptide is 1-deoxy-D-xylulose 5-phosphate reductoisomerase (Corynebacterium glutamicum (strain ATCC 13032 / DSM 20300 / JCM 1318 / BCRC 11384 / CCUG 27702 / LMG 3730 / NBRC 12168 / NCIMB 10025 / NRRL B-2784 / 534)).